A 208-amino-acid polypeptide reads, in one-letter code: Fibroblast growth factor 6 (208 aa).

The first 37 residues, 1–37, serve as a signal peptide directing secretion; sequence MALGQKLFITMSRGAGRLQGTLWALVFLGILVGMVVP. N-linked (GlcNAc...) asparagine glycosylation occurs at Asn-45. Cys-90 and Cys-157 are oxidised to a cystine.

This sequence belongs to the heparin-binding growth factors family. In terms of assembly, interacts with FGFR1, FGFR2 and FGFR4. Affinity between fibroblast growth factors (FGFs) and their receptors is increased by heparan sulfate glycosaminoglycans that function as coreceptors. Leukemia cell lines with platelet/ megakaryocytic differentiation potential.

The protein localises to the secreted. It is found in the extracellular space. Plays an important role in the regulation of cell proliferation, cell differentiation, angiogenesis and myogenesis, and is required for normal muscle regeneration. The protein is Fibroblast growth factor 6 (FGF6) of Homo sapiens (Human).